A 1133-amino-acid polypeptide reads, in one-letter code: Lysylphosphatidylglycerol biosynthesis bifunctional protein LysX (1133 aa).

A phosphatidylglycerol lysyltransferase region spans residues 1 to 626 (MTTVDASPGI…LLHHDGSTPD (626 aa)). Helical transmembrane passes span 43–63 (VPAA…IASV), 82–102 (LFNF…LAAA), 109–129 (IAWL…AVDM), 140–160 (FGEN…VLSY), 177–197 (AVLV…VELF), 233–253 (LNAI…IVLF), and 575–595 (LIPR…LPFS). A lysine--tRNA ligase region spans residues 627–1133 (VSGLQTADVD…TLPFPLAKPH (507 aa)). Residues Asp-1045 and Glu-1052 each coordinate Mg(2+).

In the N-terminal section; belongs to the LPG synthetase family. This sequence in the C-terminal section; belongs to the class-II aminoacyl-tRNA synthetase family. Requires Mg(2+) as cofactor.

Its subcellular location is the cell membrane. It catalyses the reaction tRNA(Lys) + L-lysine + ATP = L-lysyl-tRNA(Lys) + AMP + diphosphate. The enzyme catalyses L-lysyl-tRNA(Lys) + a 1,2-diacyl-sn-glycero-3-phospho-(1'-sn-glycerol) = a 1,2-diacyl-sn-glycero-3-phospho-1'-(3'-O-L-lysyl)-sn-glycerol + tRNA(Lys). Its function is as follows. Catalyzes the production of L-lysyl-tRNA(Lys)transfer and the transfer of a lysyl group from L-lysyl-tRNA(Lys) to membrane-bound phosphatidylglycerol (PG), which produces lysylphosphatidylglycerol (LPG), one of the components of the bacterial membrane with a positive net charge. LPG synthesis contributes to the resistance to cationic antimicrobial peptides (CAMPs) and likely protects M.tuberculosis against the CAMPs produced by competiting microorganisms (bacteriocins). In fact, the modification of anionic phosphatidylglycerol with positively charged L-lysine results in repulsion of the peptides. This is Lysylphosphatidylglycerol biosynthesis bifunctional protein LysX (lysX) from Mycobacterium leprae (strain Br4923).